The following is a 256-amino-acid chain: 5-keto-4-deoxy-D-glucarate aldolase (256 aa).

The active-site Proton acceptor is histidine 50. Residue glutamine 151 participates in substrate binding. Glutamate 153 lines the Mg(2+) pocket. The substrate site is built by serine 178 and aspartate 179. Mg(2+) is bound at residue aspartate 179.

This sequence belongs to the HpcH/HpaI aldolase family. KDGluc aldolase subfamily. As to quaternary structure, homohexamer; trimer of dimers. Mg(2+) serves as cofactor.

It carries out the reaction 5-dehydro-4-deoxy-D-glucarate = 2-hydroxy-3-oxopropanoate + pyruvate. It catalyses the reaction 2-dehydro-3-deoxy-D-glucarate = 2-hydroxy-3-oxopropanoate + pyruvate. The protein operates within carbohydrate acid metabolism; galactarate degradation; D-glycerate from galactarate: step 2/3. In terms of biological role, catalyzes the reversible retro-aldol cleavage of both 5-keto-4-deoxy-D-glucarate and 2-keto-3-deoxy-D-glucarate to pyruvate and tartronic semialdehyde. The sequence is that of 5-keto-4-deoxy-D-glucarate aldolase from Shigella sonnei (strain Ss046).